Consider the following 375-residue polypeptide: Alcohol dehydrogenase 6 (375 aa).

Serine 23 carries the phosphoserine modification. Residues cysteine 47, histidine 69, cysteine 99, cysteine 102, cysteine 105, cysteine 113, and cysteine 175 each coordinate Zn(2+). Residues 200 to 205 (GLGGVG), aspartate 224, lysine 229, 293 to 295 (VGL), and arginine 370 each bind NAD(+).

Belongs to the zinc-containing alcohol dehydrogenase family. Class-V subfamily. In terms of assembly, dimer. Zn(2+) is required as a cofactor.

It is found in the cytoplasm. It catalyses the reaction a primary alcohol + NAD(+) = an aldehyde + NADH + H(+). The enzyme catalyses a secondary alcohol + NAD(+) = a ketone + NADH + H(+). In terms of biological role, alcohol dehydrogenase. Catalyzes the NAD-dependent oxidation of primary alcohols to the corresponding aldehydes. Oxidizes secondary alcohols to the corresponding ketones. The protein is Alcohol dehydrogenase 6 (ADH6) of Pongo abelii (Sumatran orangutan).